Consider the following 251-residue polypeptide: 3-deoxy-manno-octulosonate cytidylyltransferase (251 aa).

It belongs to the KdsB family.

It is found in the cytoplasm. It carries out the reaction 3-deoxy-alpha-D-manno-oct-2-ulosonate + CTP = CMP-3-deoxy-beta-D-manno-octulosonate + diphosphate. It participates in nucleotide-sugar biosynthesis; CMP-3-deoxy-D-manno-octulosonate biosynthesis; CMP-3-deoxy-D-manno-octulosonate from 3-deoxy-D-manno-octulosonate and CTP: step 1/1. Its pathway is bacterial outer membrane biogenesis; lipopolysaccharide biosynthesis. Functionally, activates KDO (a required 8-carbon sugar) for incorporation into bacterial lipopolysaccharide in Gram-negative bacteria. In Agrobacterium fabrum (strain C58 / ATCC 33970) (Agrobacterium tumefaciens (strain C58)), this protein is 3-deoxy-manno-octulosonate cytidylyltransferase.